The following is a 101-amino-acid chain: Large ribosomal subunit protein uL24 (101 aa).

This sequence belongs to the universal ribosomal protein uL24 family. Part of the 50S ribosomal subunit.

In terms of biological role, one of two assembly initiator proteins, it binds directly to the 5'-end of the 23S rRNA, where it nucleates assembly of the 50S subunit. One of the proteins that surrounds the polypeptide exit tunnel on the outside of the subunit. This is Large ribosomal subunit protein uL24 from Streptococcus pyogenes serotype M2 (strain MGAS10270).